The primary structure comprises 561 residues: Long-chain-fatty-acid--CoA ligase (561 aa).

213 to 224 contributes to the ATP binding site; it reads YTGGTTGVAKGA.

Belongs to the ATP-dependent AMP-binding enzyme family. The cofactor is Mg(2+).

It localises to the membrane. It carries out the reaction a long-chain fatty acid + ATP + CoA = a long-chain fatty acyl-CoA + AMP + diphosphate. Its pathway is lipid metabolism; fatty acid beta-oxidation. Functionally, catalyzes the esterification, concomitant with transport, of exogenous long-chain fatty acids into metabolically active CoA thioesters for subsequent degradation or incorporation into phospholipids. In Salmonella typhi, this protein is Long-chain-fatty-acid--CoA ligase (fadD).